The sequence spans 330 residues: MELLSTPHSIEINNITCDSFRISWAMEDSDLERVTHYFIDLNKKENKNSNKFKHRDVPTKLVAKAVPLPMTVRGHWFLSPRTEYSVAVQTAVKQSDGEYLVSGWSETVEFCTGDYAKEHLAQLQEKAEQIAGRMLRFSVFYRNHHKEYFQHARTHCGNMLQPYLKDNSGSHGSPTSGMLHGVFFSCNTEFNTGQPPQDSPYGRWRFQIPAQRLFNPSTNLYFADFYCMYTAYHYAILVLAPKGSLGDRFCRDRLPLLDIACNKFLTCSVEDGELVFRHAQDLILEIIYTEPVDLSLGTLGEISGHQLMSLSTADAKKDPSCKTCNISVGR.

The Fibronectin type-III domain maps to 6–115; the sequence is TPHSIEINNI…ETVEFCTGDY (110 aa). Asn-14 and Asn-325 each carry an N-linked (GlcNAc...) asparagine glycan.

The protein belongs to the PHYHIP family. As to quaternary structure, interacts with PHYH and ADGRB1. As to expression, highly expressed in the brain.

Its interaction with PHYH suggests a role in the development of the central system. The polypeptide is Phytanoyl-CoA hydroxylase-interacting protein (PHYHIP) (Homo sapiens (Human)).